The primary structure comprises 206 residues: Large ribosomal subunit protein uL4 (206 aa).

Residues 47–76 (GTQSAKTRAEVSGGGIKPWRQKGTGRARQG) form a disordered region.

Belongs to the universal ribosomal protein uL4 family. In terms of assembly, part of the 50S ribosomal subunit.

One of the primary rRNA binding proteins, this protein initially binds near the 5'-end of the 23S rRNA. It is important during the early stages of 50S assembly. It makes multiple contacts with different domains of the 23S rRNA in the assembled 50S subunit and ribosome. Its function is as follows. Forms part of the polypeptide exit tunnel. The protein is Large ribosomal subunit protein uL4 of Clostridium botulinum (strain Okra / Type B1).